Reading from the N-terminus, the 65-residue chain is Muscarinic toxin 3 (65 aa).

4 disulfides stabilise this stretch: C3-C24, C17-C42, C46-C57, and C58-C63.

It belongs to the three-finger toxin family. Short-chain subfamily. Aminergic toxin sub-subfamily. In terms of tissue distribution, expressed by the venom gland.

It is found in the secreted. Potent antagonist (IC(50)=1-10 nM) of M4 (CHRM4) muscarinic receptors, and CHRM1, ADRA1A, ADRA2A and ADRA2C adrenergic receptors. Also antagonises ADRA1B and ADRA1D adrenergic receptors with a 10-times lower affinity. This is Muscarinic toxin 3 from Dendroaspis angusticeps (Eastern green mamba).